We begin with the raw amino-acid sequence, 410 residues long: Multidrug resistance protein MdtM (410 aa).

Residues 1 to 11 (MPRFFARHAAT) lie on the Cytoplasmic side of the membrane. Residues 12 to 32 (LFFPMALILYDFAAYLSTDLI) form a helical membrane-spanning segment. Residues 33-48 (QPGIINVVRDFNADVS) lie on the Periplasmic side of the membrane. A helical transmembrane segment spans residues 49–69 (LAPAAVSLYLAGGMALQWLLG). Over 70-78 (PLSDRIGRK) the chain is Cytoplasmic. A helical membrane pass occupies residues 79 to 99 (PVLITGALIFTLACAATMFTT). The Periplasmic portion of the chain corresponds to 100–103 (SMTQ). A helical transmembrane segment spans residues 104–124 (FLIARAIQGTSICFIATVGYV). The Cytoplasmic portion of the chain corresponds to 125-140 (TVQEAFGQTKGIKLMA). A helical membrane pass occupies residues 141-161 (IITSIVLIAPIIGPLSGAALM). At 162–167 (HFVHWK) the chain is on the periplasmic side. A helical membrane pass occupies residues 168-188 (VLFAIIAVMGFISFVGLLLAM). The Cytoplasmic segment spans residues 189–216 (PETVKRGAVPFSAKSVLRDFRNVFCNRL). A helical transmembrane segment spans residues 217-237 (FLFGAATISLSYIPMMSWVAV). Residues 238–251 (SPVILIDAGGLTTS) lie on the Periplasmic side of the membrane. Residues 252–272 (QFAWTQVPVFGAVIVANAIVA) form a helical membrane-spanning segment. At 273-282 (RFVKDPTEPR) the chain is on the cytoplasmic side. The chain crosses the membrane as a helical span at residues 283 to 303 (FIWRAVPIQLVGLALLIIGNL). Residues 304-307 (LSPH) are Periplasmic-facing. The chain crosses the membrane as a helical span at residues 308–328 (VWLWSVLGTSLYAFGIGLIFP). The Cytoplasmic segment spans residues 329–348 (TLFRFTLFSNNLPKGTVSAS). Residues 349-369 (LNMVILMVMSVSVEIGRWLWF) form a helical membrane-spanning segment. Residues 370 to 373 (NGGR) are Periplasmic-facing. Residues 374–394 (LPFHLLAVVAGVIVVFTLAGL) form a helical membrane-spanning segment. Over 395–410 (LNRVRQHQAAELAEEQ) the chain is Cytoplasmic.

It belongs to the major facilitator superfamily.

Its subcellular location is the cell inner membrane. Proton-dependent efflux pump. Confers resistance to a broad spectrum of chemically unrelated substrates. The protein is Multidrug resistance protein MdtM (mdtM) of Escherichia coli O157:H7.